Reading from the N-terminus, the 154-residue chain is Myoglobin (154 aa).

Residues 2–148 (GLSDGEWQLV…FRNDIAAKYK (147 aa)) enclose the Globin domain. The residue at position 4 (Ser4) is a Phosphoserine. His65 contacts nitrite. His65 serves as a coordination point for O2. Residue Thr68 is modified to Phosphothreonine. His94 serves as a coordination point for heme b.

Belongs to the globin family. In terms of assembly, monomeric.

The protein resides in the cytoplasm. The protein localises to the sarcoplasm. The catalysed reaction is Fe(III)-heme b-[protein] + nitric oxide + H2O = Fe(II)-heme b-[protein] + nitrite + 2 H(+). It carries out the reaction H2O2 + AH2 = A + 2 H2O. In terms of biological role, monomeric heme protein which primary function is to store oxygen and facilitate its diffusion within muscle tissues. Reversibly binds oxygen through a pentacoordinated heme iron and enables its timely and efficient release as needed during periods of heightened demand. Depending on the oxidative conditions of tissues and cells, and in addition to its ability to bind oxygen, it also has a nitrite reductase activity whereby it regulates the production of bioactive nitric oxide. Under stress conditions, like hypoxia and anoxia, it also protects cells against reactive oxygen species thanks to its pseudoperoxidase activity. The chain is Myoglobin (MB) from Otolemur crassicaudatus (Brown greater galago).